A 240-amino-acid chain; its full sequence is Ribonuclease 3 (240 aa).

Residues 10–136 enclose the RNase III domain; sequence VREFQETVGV…LIGAVYLDRG (127 aa). Residue Glu49 coordinates Mg(2+). Asp53 is a catalytic residue. Residues Asp122 and Glu125 each contribute to the Mg(2+) site. Glu125 is an active-site residue. The DRBM domain maps to 163–231; the sequence is DWKTSLQELT…AESAWKAIRA (69 aa). The segment at 205-240 is disordered; sequence TYGSGEGRSKKEAEQQAAESAWKAIRAATEKAKQES. A compositionally biased stretch (low complexity) spans 219–228; it reads QQAAESAWKA.

Belongs to the ribonuclease III family. As to quaternary structure, homodimer. The cofactor is Mg(2+).

It localises to the cytoplasm. It catalyses the reaction Endonucleolytic cleavage to 5'-phosphomonoester.. Functionally, digests double-stranded RNA. Involved in the processing of primary rRNA transcript to yield the immediate precursors to the large and small rRNAs (23S and 16S). Processes some mRNAs, and tRNAs when they are encoded in the rRNA operon. Processes pre-crRNA and tracrRNA of type II CRISPR loci if present in the organism. The polypeptide is Ribonuclease 3 (Thermobifida fusca (strain YX)).